Reading from the N-terminus, the 521-residue chain is Ankyrin repeat and death domain-containing protein 1B (521 aa).

ANK repeat units follow at residues 60–89 (AIERSFQNAAKSSNLDLMEKLFEKKVNINA), 93–122 (MNRTALHFAVGRNSLSAVDFLLSHKARVDV), 126–155 (HGLTVIHLAAWSGSFEIMLMLVKAGADQRA), 159–190 (EGMNALHLAAQNNNLHIVDYLIHDLHLHDLNQ), 194–223 (RGRKPFHLAAERGHVEMIEKLIFLNLHTSE), 227–256 (DGNTALHLAAMHGHSPAVQVLLTQWSEVNE), 260–289 (LNVSALQTATRNGHTALVNFLLGENADLQQ), 293–322 (SKEPPLHLAVINNRPAVVNSLLSARHDVDV), 326–355 (RRQTPLHVAADLGNVELVETLLKAGCNLKI), and 359–388 (QGKTALAVAARSQHSLVVDMLIKAERYYAW). The Death domain maps to 420 to 508 (TLLWNLAYRQ…ELAEKIRQFK (89 aa)).

The protein is Ankyrin repeat and death domain-containing protein 1B (Ankdd1b) of Mus musculus (Mouse).